A 308-amino-acid polypeptide reads, in one-letter code: Serpentine receptor class V-1 (308 aa).

The next 7 helical transmembrane spans lie at 15–35 (VSTAISLVCLPINILFVYILF), 46–68 (PFFRLCIHLSIADILMELFSTFF), 88–108 (VVPIAGMQYLGHAQAFGIIFI), 135–155 (LLLIQWITPLFFMAPLFSTDF), 184–204 (AMVDGILINLIVLLLYGAIFI), 222–242 (LALSAFIIFICYLALGVCSLL), and 256–276 (TMWFVVNDVLCNSSALVLLAL).

This sequence belongs to the nematode receptor-like protein srv family.

The protein localises to the membrane. The chain is Serpentine receptor class V-1 (srv-1) from Caenorhabditis elegans.